The sequence spans 311 residues: HPr kinase/phosphorylase (311 aa).

Active-site residues include His139 and Lys160. Residue 154-161 participates in ATP binding; sequence GDSGVGKS. Ser161 provides a ligand contact to Mg(2+). The active-site Proton acceptor; for phosphorylation activity. Proton donor; for dephosphorylation activity is the Asp178. The important for the catalytic mechanism of both phosphorylation and dephosphorylation stretch occupies residues 202–211; that stretch reads LEIRGIGIID. Mg(2+) is bound at residue Glu203. The active site involves Arg244. Positions 265 to 270 are important for the catalytic mechanism of dephosphorylation; that stretch reads PVKTGR.

Belongs to the HPrK/P family. Homohexamer. Mg(2+) is required as a cofactor.

It catalyses the reaction [HPr protein]-L-serine + ATP = [HPr protein]-O-phospho-L-serine + ADP + H(+). The enzyme catalyses [HPr protein]-O-phospho-L-serine + phosphate + H(+) = [HPr protein]-L-serine + diphosphate. In terms of biological role, catalyzes the ATP- as well as the pyrophosphate-dependent phosphorylation of a specific serine residue in HPr, a phosphocarrier protein of the phosphoenolpyruvate-dependent sugar phosphotransferase system (PTS). HprK/P also catalyzes the pyrophosphate-producing, inorganic phosphate-dependent dephosphorylation (phosphorolysis) of seryl-phosphorylated HPr (P-Ser-HPr). The two antagonistic activities of HprK/P are regulated by several intracellular metabolites, which change their concentration in response to the absence or presence of rapidly metabolisable carbon sources (glucose, fructose, etc.) in the growth medium. Therefore, by controlling the phosphorylation state of HPr, HPrK/P is a sensor enzyme that plays a major role in the regulation of carbon metabolism and sugar transport: it mediates carbon catabolite repression (CCR), and regulates PTS-catalyzed carbohydrate uptake and inducer exclusion. This is HPr kinase/phosphorylase from Levilactobacillus brevis (strain ATCC 367 / BCRC 12310 / CIP 105137 / JCM 1170 / LMG 11437 / NCIMB 947 / NCTC 947) (Lactobacillus brevis).